Here is a 114-residue protein sequence, read N- to C-terminus: Putative toxin HigB3 (114 aa).

This sequence belongs to the mycobacterial HigB family.

In terms of biological role, putative toxic component of a type II toxin-antitoxin (TA) system. Its cognate antitoxin would be HigA3. Not toxic upon expression in M.smegmatis. The sequence is that of Putative toxin HigB3 from Mycobacterium tuberculosis (strain ATCC 25618 / H37Rv).